The primary structure comprises 396 residues: Elongation factor Tu (396 aa).

The region spanning 10-206 is the tr-type G domain; it reads KPHLNIGTIG…AVDENVPDPV (197 aa). Positions 19–26 are G1; that stretch reads GHVDHGKT. 19–26 serves as a coordination point for GTP; sequence GHVDHGKT. Position 26 (T26) interacts with Mg(2+). Residues 62 to 66 are G2; the sequence is GITIN. Residues 83–86 form a G3 region; sequence DAPG. Residues 83–87 and 138–141 each bind GTP; these read DAPGH and NKSD. Residues 138–141 form a G4 region; that stretch reads NKSD. Residues 176–178 are G5; it reads SAL.

It belongs to the TRAFAC class translation factor GTPase superfamily. Classic translation factor GTPase family. EF-Tu/EF-1A subfamily. Monomer.

The protein localises to the cytoplasm. The enzyme catalyses GTP + H2O = GDP + phosphate + H(+). In terms of biological role, GTP hydrolase that promotes the GTP-dependent binding of aminoacyl-tRNA to the A-site of ribosomes during protein biosynthesis. The sequence is that of Elongation factor Tu from Kocuria rhizophila (strain ATCC 9341 / DSM 348 / NBRC 103217 / DC2201).